A 357-amino-acid chain; its full sequence is Histidinol-phosphate aminotransferase (357 aa).

Lys-222 is subject to N6-(pyridoxal phosphate)lysine.

Belongs to the class-II pyridoxal-phosphate-dependent aminotransferase family. Histidinol-phosphate aminotransferase subfamily. Homodimer. It depends on pyridoxal 5'-phosphate as a cofactor.

It carries out the reaction L-histidinol phosphate + 2-oxoglutarate = 3-(imidazol-4-yl)-2-oxopropyl phosphate + L-glutamate. Its pathway is amino-acid biosynthesis; L-histidine biosynthesis; L-histidine from 5-phospho-alpha-D-ribose 1-diphosphate: step 7/9. In Leuconostoc mesenteroides subsp. mesenteroides (strain ATCC 8293 / DSM 20343 / BCRC 11652 / CCM 1803 / JCM 6124 / NCDO 523 / NBRC 100496 / NCIMB 8023 / NCTC 12954 / NRRL B-1118 / 37Y), this protein is Histidinol-phosphate aminotransferase.